The chain runs to 133 residues: Small ribosomal subunit protein uS8 (133 aa).

Belongs to the universal ribosomal protein uS8 family. Part of the 30S ribosomal subunit. Contacts proteins S5 and S12.

In terms of biological role, one of the primary rRNA binding proteins, it binds directly to 16S rRNA central domain where it helps coordinate assembly of the platform of the 30S subunit. This Deinococcus geothermalis (strain DSM 11300 / CIP 105573 / AG-3a) protein is Small ribosomal subunit protein uS8.